A 398-amino-acid chain; its full sequence is Glycosyltransferase GlyF (398 aa).

The segment at 1–259 is GT8 domain; it reads MRKSIVLAAD…SEIAFQRSDL (259 aa). Residues 8–13 and 101–102 contribute to the UDP site; these read AADNAY and DS. The Mn(2+) site is built by Asp101, Asp103, and His221. 221 to 227 contributes to the UDP binding site; it reads HYASHDK.

This sequence in the N-terminal section; belongs to the glycosyltransferase 8 family.

Its function is as follows. May be involved in the polymorphic O-glycosylation of the serine-rich repeat protein PsrP. Has hydrolytic activity against UDP-galactose and to a lesser extent against UDP-glucose; no glycosyltransferase activity has been seen with tested substrates. This chain is Glycosyltransferase GlyF, found in Streptococcus pneumoniae serotype 4 (strain ATCC BAA-334 / TIGR4).